Here is a 133-residue protein sequence, read N- to C-terminus: Small ribosomal subunit protein uS8 (133 aa).

It belongs to the universal ribosomal protein uS8 family. As to quaternary structure, part of the 30S ribosomal subunit. Contacts proteins S5 and S12.

One of the primary rRNA binding proteins, it binds directly to 16S rRNA central domain where it helps coordinate assembly of the platform of the 30S subunit. The chain is Small ribosomal subunit protein uS8 from Chloroflexus aggregans (strain MD-66 / DSM 9485).